The chain runs to 637 residues: tRNA uridine 5-carboxymethylaminomethyl modification enzyme MnmG (637 aa).

14–19 is an FAD binding site; the sequence is GAGHAG. 279-293 contacts NAD(+); it reads GPRYCPSIEDKVVRF.

It belongs to the MnmG family. Homodimer. Heterotetramer of two MnmE and two MnmG subunits. FAD is required as a cofactor.

The protein localises to the cytoplasm. Functionally, NAD-binding protein involved in the addition of a carboxymethylaminomethyl (cmnm) group at the wobble position (U34) of certain tRNAs, forming tRNA-cmnm(5)s(2)U34. The polypeptide is tRNA uridine 5-carboxymethylaminomethyl modification enzyme MnmG (Desulfitobacterium hafniense (strain DSM 10664 / DCB-2)).